The chain runs to 399 residues: Probable peptidoglycan glycosyltransferase FtsW (399 aa).

Helical transmembrane passes span P19–S39, I61–W81, S85–G105, W114–A134, V160–L180, F198–Y218, L285–I305, M314–I334, and L350–I370.

Belongs to the SEDS family. FtsW subfamily.

It localises to the cell inner membrane. The enzyme catalyses [GlcNAc-(1-&gt;4)-Mur2Ac(oyl-L-Ala-gamma-D-Glu-L-Lys-D-Ala-D-Ala)](n)-di-trans,octa-cis-undecaprenyl diphosphate + beta-D-GlcNAc-(1-&gt;4)-Mur2Ac(oyl-L-Ala-gamma-D-Glu-L-Lys-D-Ala-D-Ala)-di-trans,octa-cis-undecaprenyl diphosphate = [GlcNAc-(1-&gt;4)-Mur2Ac(oyl-L-Ala-gamma-D-Glu-L-Lys-D-Ala-D-Ala)](n+1)-di-trans,octa-cis-undecaprenyl diphosphate + di-trans,octa-cis-undecaprenyl diphosphate + H(+). It participates in cell wall biogenesis; peptidoglycan biosynthesis. In terms of biological role, peptidoglycan polymerase that is essential for cell division. This chain is Probable peptidoglycan glycosyltransferase FtsW, found in Marinobacter nauticus (strain ATCC 700491 / DSM 11845 / VT8) (Marinobacter aquaeolei).